Reading from the N-terminus, the 305-residue chain is UPF0282 protein Tneu_0934 (305 aa).

The protein belongs to the UPF0282 family.

The protein is UPF0282 protein Tneu_0934 of Pyrobaculum neutrophilum (strain DSM 2338 / JCM 9278 / NBRC 100436 / V24Sta) (Thermoproteus neutrophilus).